Consider the following 336-residue polypeptide: Homoserine O-acetyltransferase (336 aa).

Residues 58–321 (AILVLHALTG…PHGHDAFLID (264 aa)) enclose the AB hydrolase-1 domain. The active-site Nucleophile is the S147. R204 is a substrate binding site. Residues D286 and H315 contribute to the active site. Residue D316 coordinates substrate.

It belongs to the AB hydrolase superfamily. MetX family. As to quaternary structure, homodimer.

The protein localises to the cytoplasm. The enzyme catalyses L-homoserine + acetyl-CoA = O-acetyl-L-homoserine + CoA. It participates in amino-acid biosynthesis; L-methionine biosynthesis via de novo pathway; O-acetyl-L-homoserine from L-homoserine: step 1/1. Transfers an acetyl group from acetyl-CoA to L-homoserine, forming acetyl-L-homoserine. This is Homoserine O-acetyltransferase from Deinococcus geothermalis (strain DSM 11300 / CIP 105573 / AG-3a).